A 147-amino-acid chain; its full sequence is Myoglobin (147 aa).

Positions 2–141 (ADFDAVLKCW…IIADLEANYK (140 aa)) constitute a Globin domain. His60 provides a ligand contact to nitrite. His60 is a binding site for O2. His89 lines the heme b pocket.

This sequence belongs to the globin family. In terms of assembly, monomeric.

Its subcellular location is the cytoplasm. It is found in the sarcoplasm. The catalysed reaction is Fe(III)-heme b-[protein] + nitric oxide + H2O = Fe(II)-heme b-[protein] + nitrite + 2 H(+). The enzyme catalyses H2O2 + AH2 = A + 2 H2O. In terms of biological role, monomeric heme protein which primary function is to store oxygen and facilitate its diffusion within muscle tissues. Reversibly binds oxygen through a pentacoordinated heme iron and enables its timely and efficient release as needed during periods of heightened demand. Depending on the oxidative conditions of tissues and cells, and in addition to its ability to bind oxygen, it also has a nitrite reductase activity whereby it regulates the production of bioactive nitric oxide. Under stress conditions, like hypoxia and anoxia, it also protects cells against reactive oxygen species thanks to its pseudoperoxidase activity. This Thunnus obesus (Bigeye tuna) protein is Myoglobin (mb).